Reading from the N-terminus, the 818-residue chain is MAEEAADVDIDIEGDINESSKSIYDSLNTGFAPEHYIESAWQNEEGLAPWALDSSISEENREAIKKMLLEEEYYLSNKPLAVKFWSDSQEGEKQCIKRVRSPAKASSSPVKWTKEEKNLFEQGLATFGRRWTSIARLIGSRSVLQVKNYARHYFKNKCKLEGFVKEEAKIGSLQIPNLQDYENEPDITDEPTTFRGRADPNLNAIKIEKLSDDEEIDITDEVDELLSNKTNLDTIIIAKTDKVKETKVETEVQQKSHSTTEHSQTDIPKLVLQQTETECLDSVNPLTCITSPKWTLSPQQCEEDDYDQPDVQDCLQEKCLSPHAEDLTVLCENENDSQDEDDEIKPPDQELEIDRNFILDEEKQAIPEFFEGRQAKTPDRYLRIRNYILDQWENCKPKYLNKTSVRPGLKNCGDVNCIGRIHTYLELIGAINFGCEQAIYNRPRPVDKTKCKEGKDTLEAYKLAHRLQSMRTRKRRVRDPWGNWCDAKDLEGQTYEHLSAEELARRHEDKIKSYKYSKGTRQVRSSFDPFQLIPCSAFSEEKKAPFQVKVSCEAMLVLDLHAHVSMAEVIGLLGGRYTESESVVEICAVEPCNSLSTGLQCEMDPVSQTQASEALASRGYSVIGWYHSHPAFDPNPSIRDIDTQAKYQNYFSRGGAKFLGMIISPYNRRNPHPQSQVACLIISDELSNDGSYRIPYKFEIEYMQGEPQWELVFAKTRWIIEKYRSSHSSVSMDKRFRHDSELTCLQKLLMCMKKTLGNTACPLITEEFLHRIEEYFRTSYKKESNYQIEDNDPCKQHSDTTFTMDSFQDYEPNGRPSL.

The 52-residue stretch at 107–158 folds into the SANT domain; the sequence is SSPVKWTKEEKNLFEQGLATFGRRWTSIARLIGSRSVLQVKNYARHYFKNKC. Residues 344-442 enclose the SWIRM domain; that stretch reads IKPPDQELEI…FGCEQAIYNR (99 aa). The region spanning 548-680 is the MPN domain; the sequence is VKVSCEAMLV…PHPQSQVACL (133 aa). 3 residues coordinate Zn(2+): His627, His629, and Asp640. The JAMM motif motif lies at 627–640; it reads HSHPAFDPNPSIRD. Positions 745 to 749 match the LXXLL motif motif; sequence LQKLL.

The protein belongs to the peptidase M67A family. MYSM1 subfamily.

It is found in the nucleus. Its function is as follows. Metalloprotease that specifically deubiquitinates monoubiquitinated histone H2A, a specific tag for epigenetic transcriptional repression, thereby acting as a coactivator. Preferentially deubiquitinates monoubiquitinated H2A in hyperacetylated nucleosomes. Deubiquitination of histone H2A leads to facilitate the phosphorylation and dissociation of histone H1 from the nucleosome. Acts as a coactivator by participating in the initiation and elongation steps of androgen receptor (AR)-induced gene activation. This chain is Histone H2A deubiquitinase MYSM1 (mysm1), found in Xenopus laevis (African clawed frog).